The following is a 477-amino-acid chain: Tripartite motif-containing protein 72 (477 aa).

16 residues coordinate Zn(2+): Leu14, Pro17, Pro29, Cys31, Thr34, Gln37, Thr53, Pro56, Gly86, Leu89, Val97, Glu100, Leu105, Gly108, Gly114, and Lys117. An RING-type zinc finger spans residues 16-59 (CPLCLELFRAPVTPECGHTFCQGCLTGAPKNQDQNGSTPCPTCQ). The B box-type zinc-finger motif lies at 83–124 (VPKGHCLEHLDPLSVYCEQDKELICGVCASLGKHKGHNIITA). The stretch at 135–232 (LPQQQVILQE…QMDGVLKDVE (98 aa)) forms a coiled coil. The B30.2/SPRY domain maps to 272-476 (DEFKFQVWRK…LKIFYPPAEQ (205 aa)).

Belongs to the TRIM/RBCC family. In terms of assembly, homodimer. Homooligomer; disulfide-linked. Oligomerizes on the phospholipid membrane. In terms of processing, disulfide bond formation at Cys-244 occurs in case of membrane damage that cause the entry of the oxidized milieu of the extracellular space, resulting in homooligomerization.

The protein localises to the cell membrane. It localises to the sarcolemma. Its subcellular location is the cytoplasmic vesicle membrane. It catalyses the reaction S-ubiquitinyl-[E2 ubiquitin-conjugating enzyme]-L-cysteine + [acceptor protein]-L-lysine = [E2 ubiquitin-conjugating enzyme]-L-cysteine + N(6)-ubiquitinyl-[acceptor protein]-L-lysine.. It participates in protein modification; protein ubiquitination. With respect to regulation, specifically binds phosphatidylserine. The binding to phospholipids enhances ubiquitination activity. Functionally, muscle-specific E3 ubiquitin-protein ligase that plays a central role in cell membrane repair by nucleating the assembly of the repair machinery at injury sites. Acts as a sensor of oxidation: upon membrane damage, entry of extracellular oxidative environment results in disulfide bond formation and homooligomerization at the injury site. This oligomerization acts as a nucleation site for recruitment of TRIM72-containing vesicles to the injury site, leading to membrane patch formation. Probably acts upstream of the Ca(2+)-dependent membrane resealing process. Required for transport of DYSF to sites of cell injury during repair patch formation. Regulates membrane budding and exocytosis. May be involved in the regulation of the mobility of KCNB1-containing endocytic vesicles. This chain is Tripartite motif-containing protein 72 (trim72), found in Xenopus tropicalis (Western clawed frog).